The chain runs to 85 residues: Putative defensin-like protein 258 (85 aa).

The signal sequence occupies residues 1 to 25 (MINVSLKRSLLIFISVITSNIGSEA). 3 disulfides stabilise this stretch: C57-C75, C63-C82, and C67-C84.

This sequence belongs to the DEFL family.

The protein resides in the secreted. This chain is Putative defensin-like protein 258, found in Arabidopsis thaliana (Mouse-ear cress).